A 350-amino-acid chain; its full sequence is Selenide, water dikinase (350 aa).

Cysteine 17 is an active-site residue. ATP is bound by residues lysine 20 and 48 to 50 (LFD). Aspartate 51 provides a ligand contact to Mg(2+). Residues aspartate 68, aspartate 91, and 139–141 (GHS) contribute to the ATP site. Aspartate 91 is a binding site for Mg(2+). Aspartate 229 is a binding site for Mg(2+).

It belongs to the selenophosphate synthase 1 family. Class I subfamily. Homodimer. Mg(2+) is required as a cofactor.

The catalysed reaction is hydrogenselenide + ATP + H2O = selenophosphate + AMP + phosphate + 2 H(+). Its function is as follows. Synthesizes selenophosphate from selenide and ATP. The chain is Selenide, water dikinase from Bdellovibrio bacteriovorus (strain ATCC 15356 / DSM 50701 / NCIMB 9529 / HD100).